We begin with the raw amino-acid sequence, 160 residues long: Glyoxalase domain-containing protein 5 (160 aa).

The VOC domain occupies 37–157; it reads RLDHIVMTVK…DRNLIEVSNY (121 aa).

Belongs to the glyoxalase I family.

In Homo sapiens (Human), this protein is Glyoxalase domain-containing protein 5 (GLOD5).